Consider the following 110-residue polypeptide: Small ribosomal subunit protein eS25 (110 aa).

The disordered stretch occupies residues 1-38; that stretch reads MGGKKKPTLSQLAKKAEKEKAQQAQKAKKEVKKEETPA. The segment covering 14–38 has biased composition (basic and acidic residues); the sequence is KKAEKEKAQQAQKAKKEVKKEETPA.

Belongs to the eukaryotic ribosomal protein eS25 family.

The protein is Small ribosomal subunit protein eS25 (rps25e) of Pyrobaculum aerophilum (strain ATCC 51768 / DSM 7523 / JCM 9630 / CIP 104966 / NBRC 100827 / IM2).